We begin with the raw amino-acid sequence, 520 residues long: GMP synthase [glutamine-hydrolyzing] (520 aa).

Residues 13 to 205 form the Glutamine amidotransferase type-1 domain; sequence KIIVLDYGSQ…ALNICKAKGD (193 aa). Cys-90 (nucleophile) is an active-site residue. Active-site residues include His-179 and Glu-181. The GMPS ATP-PPase domain maps to 206–395; it reads WSMDNFIDMQ…LGMPDHIVWR (190 aa). 233-239 is a binding site for ATP; that stretch reads SGGVDSS.

Homodimer.

The enzyme catalyses XMP + L-glutamine + ATP + H2O = GMP + L-glutamate + AMP + diphosphate + 2 H(+). It participates in purine metabolism; GMP biosynthesis; GMP from XMP (L-Gln route): step 1/1. Functionally, catalyzes the synthesis of GMP from XMP. In Streptococcus pneumoniae (strain P1031), this protein is GMP synthase [glutamine-hydrolyzing].